We begin with the raw amino-acid sequence, 130 residues long: Small ribosomal subunit protein uS9 (130 aa).

Belongs to the universal ribosomal protein uS9 family.

The protein is Small ribosomal subunit protein uS9 of Shewanella piezotolerans (strain WP3 / JCM 13877).